The following is a 279-amino-acid chain: Glutamate racemase (279 aa).

Substrate contacts are provided by residues 13-14 (DS) and 45-46 (YG). Cysteine 76 serves as the catalytic Proton donor/acceptor. Residue 77-78 (NT) coordinates substrate. The Proton donor/acceptor role is filled by cysteine 185. 186 to 187 (TH) is a binding site for substrate.

The protein belongs to the aspartate/glutamate racemases family.

It catalyses the reaction L-glutamate = D-glutamate. It participates in cell wall biogenesis; peptidoglycan biosynthesis. Functionally, provides the (R)-glutamate required for cell wall biosynthesis. This Picosynechococcus sp. (strain ATCC 27264 / PCC 7002 / PR-6) (Agmenellum quadruplicatum) protein is Glutamate racemase.